Here is a 405-residue protein sequence, read N- to C-terminus: Glycosylated lysosomal membrane protein A (405 aa).

The first 25 residues, 1–25 (MGCTRGWRLLLLLGLVCVGALQGRG), serve as a signal peptide directing secretion. The Lumenal segment spans residues 26 to 365 (QEESREVSLQ…YGEPPRDSFS (340 aa)). Residues Asn-55, Asn-86, Asn-125, Asn-129, Asn-143, Asn-153, Asn-157, Asn-164, Asn-169, Asn-179, Asn-206, Asn-222, Asn-267, Asn-304, and Asn-331 are each glycosylated (N-linked (GlcNAc...) asparagine). A helical transmembrane segment spans residues 366–386 (ILVICIMAVALGTPLLLLIVG). The Cytoplasmic segment spans residues 387–405 (TLVVTALRHKVYSNYEPIN). The short motif at 401-405 (YEPIN) is the Lysosomal targeting motif element.

Belongs to the GLMP family. In terms of assembly, interacts (via lumenal domain) with lysosomal protein MFSD1; the interaction starts while both proteins are still in the endoplasmic reticulum and is required for stabilization of MFSD1 in lysosomes but has no direct effect on its targeting to lysosomes or transporter activity.

The protein localises to the lysosome membrane. In terms of biological role, required to protect lysosomal transporter MFSD1 from lysosomal proteolysis and for MFSD1 lysosomal localization. The sequence is that of Glycosylated lysosomal membrane protein A (glmp-a) from Xenopus laevis (African clawed frog).